Here is a 343-residue protein sequence, read N- to C-terminus: N-acetyl-gamma-glutamyl-phosphate reductase (343 aa).

Residue Cys-147 is part of the active site.

The protein belongs to the NAGSA dehydrogenase family. Type 1 subfamily.

The protein localises to the cytoplasm. It carries out the reaction N-acetyl-L-glutamate 5-semialdehyde + phosphate + NADP(+) = N-acetyl-L-glutamyl 5-phosphate + NADPH + H(+). Its pathway is amino-acid biosynthesis; L-arginine biosynthesis; N(2)-acetyl-L-ornithine from L-glutamate: step 3/4. Catalyzes the NADPH-dependent reduction of N-acetyl-5-glutamyl phosphate to yield N-acetyl-L-glutamate 5-semialdehyde. This Staphylococcus aureus (strain USA300) protein is N-acetyl-gamma-glutamyl-phosphate reductase.